Here is a 102-residue protein sequence, read N- to C-terminus: ATP-dependent Clp protease adapter protein ClpS (102 aa).

It belongs to the ClpS family. In terms of assembly, binds to the N-terminal domain of the chaperone ClpA.

Involved in the modulation of the specificity of the ClpAP-mediated ATP-dependent protein degradation. This chain is ATP-dependent Clp protease adapter protein ClpS, found in Dechloromonas aromatica (strain RCB).